Consider the following 132-residue polypeptide: D-ribose pyranase (132 aa).

H20 acts as the Proton donor in catalysis. Substrate is bound by residues D28, H99, and 121–123 (YSN).

The protein belongs to the RbsD / FucU family. RbsD subfamily. As to quaternary structure, homodecamer.

The protein resides in the cytoplasm. The catalysed reaction is beta-D-ribopyranose = beta-D-ribofuranose. Its pathway is carbohydrate metabolism; D-ribose degradation; D-ribose 5-phosphate from beta-D-ribopyranose: step 1/2. In terms of biological role, catalyzes the interconversion of beta-pyran and beta-furan forms of D-ribose. In Streptococcus agalactiae serotype III (strain NEM316), this protein is D-ribose pyranase.